The primary structure comprises 378 residues: Ribosomal RNA large subunit methyltransferase G (378 aa).

This sequence belongs to the methyltransferase superfamily. RlmG family.

Its subcellular location is the cytoplasm. The catalysed reaction is guanosine(1835) in 23S rRNA + S-adenosyl-L-methionine = N(2)-methylguanosine(1835) in 23S rRNA + S-adenosyl-L-homocysteine + H(+). Specifically methylates the guanine in position 1835 (m2G1835) of 23S rRNA. The protein is Ribosomal RNA large subunit methyltransferase G of Escherichia coli (strain ATCC 8739 / DSM 1576 / NBRC 3972 / NCIMB 8545 / WDCM 00012 / Crooks).